The sequence spans 195 residues: MASSLDALKARVESLLGDHLESATIDRGELTIVCSASSIAVSCQLLRDQAGFDQCIDLCGMDYSTYRDGLHDRPRFAVVLHLMSVQNNQRLRVRFFAPDDDFPVVPSLIDVWASVNWYEREAFDMYGIVFEGHPDLRRILTDYGFVGHPFRKDFPVSGHVEMRYDPTEGRVIYQPVTIEPREITPRIIREENYGG.

Belongs to the complex I 30 kDa subunit family. As to quaternary structure, NDH-1 is composed of 14 different subunits. Subunits NuoB, C, D, E, F, and G constitute the peripheral sector of the complex.

The protein resides in the cell inner membrane. It catalyses the reaction a quinone + NADH + 5 H(+)(in) = a quinol + NAD(+) + 4 H(+)(out). Its function is as follows. NDH-1 shuttles electrons from NADH, via FMN and iron-sulfur (Fe-S) centers, to quinones in the respiratory chain. The immediate electron acceptor for the enzyme in this species is believed to be ubiquinone. Couples the redox reaction to proton translocation (for every two electrons transferred, four hydrogen ions are translocated across the cytoplasmic membrane), and thus conserves the redox energy in a proton gradient. This is NADH-quinone oxidoreductase subunit C from Laribacter hongkongensis (strain HLHK9).